The chain runs to 244 residues: Octanoyltransferase (244 aa).

The interval 1–21 (MDKKLHSVSPESGPNSNLDLT) is disordered. The span at 9–21 (SPESGPNSNLDLT) shows a compositional bias: polar residues. Residues 59–244 (PFSPQAVWLL…LNWEKINQSL (186 aa)) enclose the BPL/LPL catalytic domain. Residues 101-108 (RGGEVTHH), 168-170 (SIG), and 181-183 (GFS) each bind substrate. The Acyl-thioester intermediate role is filled by Cys199.

The protein belongs to the LipB family.

Its subcellular location is the cytoplasm. It carries out the reaction octanoyl-[ACP] + L-lysyl-[protein] = N(6)-octanoyl-L-lysyl-[protein] + holo-[ACP] + H(+). Its pathway is protein modification; protein lipoylation via endogenous pathway; protein N(6)-(lipoyl)lysine from octanoyl-[acyl-carrier-protein]: step 1/2. Catalyzes the transfer of endogenously produced octanoic acid from octanoyl-acyl-carrier-protein onto the lipoyl domains of lipoate-dependent enzymes. Lipoyl-ACP can also act as a substrate although octanoyl-ACP is likely to be the physiological substrate. This is Octanoyltransferase from Prochlorococcus marinus (strain NATL1A).